Reading from the N-terminus, the 570-residue chain is Hemagglutinin-neuraminidase (570 aa).

Topologically, residues 1-26 (MNRAVCQVALENDEREAKNTWRLVFR) are intravirion. The helical transmembrane segment at 27 to 48 (IAILLLTVMTLAISAAALAYSM) threads the bilayer. Topologically, residues 49–570 (EASTPGDLVS…LVEILKDDGV (522 aa)) are virion surface. Asparagine 119 carries an N-linked (GlcNAc...) asparagine; by host glycan. Residues 124–152 (GAPVHDPDYIGGIGKELIVDDTSDVTSFY) form an important for interaction with fusion/F protein region. 3 disulfides stabilise this stretch: cysteine 172/cysteine 195, cysteine 185/cysteine 246, and cysteine 237/cysteine 250. An involved in neuraminidase activity region spans residues 233–238 (NRKSCS). Residues asparagine 340 and asparagine 432 are each glycosylated (N-linked (GlcNAc...) asparagine; by host). Disulfide bonds link cysteine 343–cysteine 460 and cysteine 454–cysteine 464. N-linked (GlcNAc...) asparagine; by host glycosylation is found at asparagine 480, asparagine 507, and asparagine 537. An intrachain disulfide couples cysteine 530 to cysteine 541.

Belongs to the paramyxoviruses hemagglutinin-neuraminidase family. Homotetramer; composed of disulfide-linked homodimers. Interacts with F protein trimer. Interacts with host CG-1B; this interaction inhibits viral adsorption and replication rather than internalization.

It localises to the virion membrane. The protein resides in the host cell membrane. It carries out the reaction Hydrolysis of alpha-(2-&gt;3)-, alpha-(2-&gt;6)-, alpha-(2-&gt;8)- glycosidic linkages of terminal sialic acid residues in oligosaccharides, glycoproteins, glycolipids, colominic acid and synthetic substrates.. Functionally, mediates the viral entry into the host cell together with fusion/F protein. Attaches the virus to sialic acid-containing cell receptors and thereby initiates infection. Binding of HN protein to the receptor induces a conformational change that allows the F protein to trigger virion/cell membranes fusion. Neuraminidase activity ensures the efficient spread of the virus by dissociating the mature virions from the neuraminic acid containing glycoproteins. The polypeptide is Hemagglutinin-neuraminidase (HN) (Gallus gallus (Chicken)).